Consider the following 185-residue polypeptide: Adenine phosphoribosyltransferase (185 aa).

Belongs to the purine/pyrimidine phosphoribosyltransferase family. In terms of assembly, homodimer.

The protein localises to the cytoplasm. It carries out the reaction AMP + diphosphate = 5-phospho-alpha-D-ribose 1-diphosphate + adenine. It functions in the pathway purine metabolism; AMP biosynthesis via salvage pathway; AMP from adenine: step 1/1. Its function is as follows. Catalyzes a salvage reaction resulting in the formation of AMP, that is energically less costly than de novo synthesis. This chain is Adenine phosphoribosyltransferase, found in Aliarcobacter butzleri (strain RM4018) (Arcobacter butzleri).